The following is a 166-amino-acid chain: Large ribosomal subunit protein eL21 (166 aa).

The protein belongs to the eukaryotic ribosomal protein eL21 family. Component of the large ribosomal subunit.

Its subcellular location is the cytoplasm. It localises to the cytosol. The protein localises to the endoplasmic reticulum. Its function is as follows. Component of the large ribosomal subunit. The ribosome is a large ribonucleoprotein complex responsible for the synthesis of proteins in the cell. The sequence is that of Large ribosomal subunit protein eL21 (RPL21) from Entamoeba histolytica (strain ATCC 30459 / HM-1:IMSS / ABRM).